The chain runs to 434 residues: Beta-glucuronosyltransferase GlcAT14B (434 aa).

Over 1–21 the chain is Cytoplasmic; sequence MKKLKSYYMQVRNQQQSLDRK. The chain crosses the membrane as a signal-anchor for type II membrane protein span at residues 22-42; that stretch reads WILPLAIGSICSLFLLLLTNL. The Lumenal portion of the chain corresponds to 43 to 434; it reads ASSSGQTRLI…TENFRPRQCR (392 aa). 4 N-linked (GlcNAc...) asparagine glycosylation sites follow: Asn-138, Asn-187, Asn-316, and Asn-392.

The protein belongs to the glycosyltransferase 14 family.

Its subcellular location is the golgi apparatus membrane. In terms of biological role, beta-glucuronosyltransferase involved in the biosynthesis of type II arabinogalactan (AG). Modifies both the beta-1,6-linked galactan and beta-1,3-linked galactan present in type II AG. The protein is Beta-glucuronosyltransferase GlcAT14B of Arabidopsis thaliana (Mouse-ear cress).